Here is a 329-residue protein sequence, read N- to C-terminus: Serine/threonine-protein phosphatase PP1-alpha (329 aa).

Mn(2+) is bound by residues D64, H66, D92, and N124. Catalysis depends on H125, which acts as the Proton donor. 2 residues coordinate Mn(2+): H173 and H248. The segment at 309–329 (GMNSGRPAVGGGRPGTTAGKK) is disordered.

This sequence belongs to the PPP phosphatase family. PP-1 subfamily. In terms of assembly, interacts with lab-1; the interaction is direct. Interacts with knl-1; the interaction is direct. It depends on Mn(2+) as a cofactor.

It carries out the reaction O-phospho-L-seryl-[protein] + H2O = L-seryl-[protein] + phosphate. The catalysed reaction is O-phospho-L-threonyl-[protein] + H2O = L-threonyl-[protein] + phosphate. Serine/threonine-protein phosphatase which antagonizes the function of air-2 in the regulation of chromosome cohesion. Dephosphorylates histone H3 at 'Ser-10'. Dephosphorylates translation initiation factor eIF2alpha. Involved in the activation of chloride channel clh-3 during cell swelling and meiotic maturation. This is Serine/threonine-protein phosphatase PP1-alpha (gsp-1) from Caenorhabditis briggsae.